The sequence spans 417 residues: Gamma-glutamyl phosphate reductase (417 aa).

This sequence belongs to the gamma-glutamyl phosphate reductase family.

Its subcellular location is the cytoplasm. The catalysed reaction is L-glutamate 5-semialdehyde + phosphate + NADP(+) = L-glutamyl 5-phosphate + NADPH + H(+). The protein operates within amino-acid biosynthesis; L-proline biosynthesis; L-glutamate 5-semialdehyde from L-glutamate: step 2/2. Catalyzes the NADPH-dependent reduction of L-glutamate 5-phosphate into L-glutamate 5-semialdehyde and phosphate. The product spontaneously undergoes cyclization to form 1-pyrroline-5-carboxylate. This chain is Gamma-glutamyl phosphate reductase, found in Serratia proteamaculans (strain 568).